We begin with the raw amino-acid sequence, 91 residues long: Large ribosomal subunit protein bL31B (91 aa).

This sequence belongs to the bacterial ribosomal protein bL31 family. Type B subfamily. As to quaternary structure, part of the 50S ribosomal subunit.

This Mycolicibacterium vanbaalenii (strain DSM 7251 / JCM 13017 / BCRC 16820 / KCTC 9966 / NRRL B-24157 / PYR-1) (Mycobacterium vanbaalenii) protein is Large ribosomal subunit protein bL31B.